We begin with the raw amino-acid sequence, 224 residues long: uncharacterized protein (224 aa).

The signal sequence occupies residues 1-23 (MKKLLAAGIIGLLTVSIASPSFA). The VWFA domain occupies 31 to 224 (NVAVLFDGSG…WEKEAQKFTE (194 aa)).

To B.subtilis YwmC.

This is an uncharacterized protein from Bacillus subtilis (strain 168).